The following is a 514-amino-acid chain: Maltose/maltodextrin transport system permease protein MalF (514 aa).

The Cytoplasmic portion of the chain corresponds to 1–12 (MDAVKKKHWWQS). A helical transmembrane segment spans residues 13-35 (PQLTWSVIGLLCLLVGYLVVLMY). Residues 36–39 (AQGE) lie on the Periplasmic side of the membrane. A helical transmembrane segment spans residues 40-57 (YLFAIMTLILSSVGLYIF). Residues 58 to 69 (SNRKAYAWRYVY) lie on the Cytoplasmic side of the membrane. Residues 70–92 (PGLAGMGLFVLFPLICTIAIAFT) traverse the membrane as a helical segment. Residues 93 to 283 (NYSSTNQLTF…QKPFFAIFVW (191 aa)) lie on the Periplasmic side of the membrane. The ABC transmembrane type-1 domain occupies 281–505 (FVWTVVFSVL…LLVGALAIVN (225 aa)). The helical transmembrane segment at 284–306 (TVVFSVLTVILTVAVGMVLACLV) threads the bilayer. Topologically, residues 307-318 (QWEALKGKAIYR) are cytoplasmic. A helical membrane pass occupies residues 319–341 (VLLILPYAVPSFISILIFKGLFN). Residues 342-369 (QSFGEINMMLSALFGIKPAWFSDPTTAR) are Periplasmic-facing. A helical transmembrane segment spans residues 370-392 (TMIIIVNTWLGYPYMMILCMGLL). The Cytoplasmic portion of the chain corresponds to 393–412 (KAIPDDLYEASAMDGAGPFQ). The helical transmembrane segment at 413 to 435 (NFFKITLPLLIKPLTPLMIASFA) threads the bilayer. The Periplasmic portion of the chain corresponds to 436 to 483 (FNFNNFVLIQLLTNGGPDRLGTTTPAGYTDLLVSYTYRIAFEGGGGQD). A helical transmembrane segment spans residues 484–506 (FGLAAAIATLIFLLVGALAIVNL). Over 507–514 (KATRMKFD) the chain is Cytoplasmic.

It belongs to the binding-protein-dependent transport system permease family. MalFG subfamily. As to quaternary structure, the complex is composed of two ATP-binding proteins (MalK), two transmembrane proteins (MalG and MalF) and a solute-binding protein (MalE).

The protein resides in the cell inner membrane. In terms of biological role, part of the ABC transporter complex MalEFGK involved in maltose/maltodextrin import. Probably responsible for the translocation of the substrate across the membrane. The sequence is that of Maltose/maltodextrin transport system permease protein MalF (malF) from Klebsiella aerogenes (Enterobacter aerogenes).